A 349-amino-acid chain; its full sequence is Large ribosomal subunit protein uL2mz, N-terminal part (349 aa).

It belongs to the universal ribosomal protein uL2 family. As to quaternary structure, component of the mitochondrial ribosome large subunit.

The protein localises to the mitochondrion. The protein is Large ribosomal subunit protein uL2mz, N-terminal part of Arabidopsis thaliana (Mouse-ear cress).